The following is a 224-amino-acid chain: Attacin-A (224 aa).

The N-terminal stretch at 1–20 is a signal peptide; the sequence is MQKTSILIVALVALFAITEA. Positions 21–34 are excised as a propeptide; sequence LPSLPTTGPIRVRR.

It belongs to the attacin/sarcotoxin-2 family. In terms of tissue distribution, hemolymph (at protein level).

The protein localises to the secreted. Hemolymph antibacterial protein. The sequence is that of Attacin-A (AttA) from Drosophila melanogaster (Fruit fly).